The chain runs to 285 residues: K88 fimbrial protein AD (285 aa).

The signal sequence occupies residues methionine 1–alanine 21.

It belongs to the fimbrial K88 protein family. As to quaternary structure, K88 fimbria, 0.1-1 micrometer in length and 7 nanometers in diameter, is composed of about 100 identical subunits.

Its subcellular location is the fimbrium. K88 major fimbrial subunit. Fimbriae (also called pili), are polar filaments radiating from the surface of the bacterium to a length of 0.5-1.5 micrometers and numbering 100-300 per cell. They enable bacteria to colonize the epithelium of specific host organs. This chain is K88 fimbrial protein AD (faeG), found in Escherichia coli.